The primary structure comprises 207 residues: HTH-type transcriptional regulator AqdR (207 aa).

An HTH tetR-type domain is found at 16–76; it reads ARFRERVLDA…DALLTRTQAE (61 aa). The H-T-H motif DNA-binding region spans 39-58; it reads GFADVARKAGVNGVSLYRRW.

Functionally, may regulate the expression of genes involved in the degradation of the Pseudomonas aeruginosa quorum sensing signal molecules HHQ (2-heptyl-4-quinolone) and PQS (2-heptyl-3-hydroxy-4-quinolone). The polypeptide is HTH-type transcriptional regulator AqdR (Rhodococcus erythropolis (Arthrobacter picolinophilus)).